Reading from the N-terminus, the 204-residue chain is FMN-dependent NADH:quinone oxidoreductase (204 aa).

FMN is bound by residues S9 and 15-17 (SAS).

This sequence belongs to the azoreductase type 1 family. As to quaternary structure, homodimer. The cofactor is FMN.

The enzyme catalyses 2 a quinone + NADH + H(+) = 2 a 1,4-benzosemiquinone + NAD(+). It carries out the reaction N,N-dimethyl-1,4-phenylenediamine + anthranilate + 2 NAD(+) = 2-(4-dimethylaminophenyl)diazenylbenzoate + 2 NADH + 2 H(+). Quinone reductase that provides resistance to thiol-specific stress caused by electrophilic quinones. Its function is as follows. Also exhibits azoreductase activity. Catalyzes the reductive cleavage of the azo bond in aromatic azo compounds to the corresponding amines. The sequence is that of FMN-dependent NADH:quinone oxidoreductase from Xanthomonas campestris pv. campestris (strain ATCC 33913 / DSM 3586 / NCPPB 528 / LMG 568 / P 25).